The sequence spans 458 residues: Cysteine--tRNA ligase (458 aa).

C29 is a binding site for Zn(2+). The 'HIGH' region motif lies at 31 to 41; sequence PTVYDFLHIGN. Zn(2+)-binding residues include C211, H236, and E240. A 'KMSKS' region motif is present at residues 269-273; the sequence is KMSKS. ATP is bound at residue K272.

The protein belongs to the class-I aminoacyl-tRNA synthetase family. In terms of assembly, monomer. The cofactor is Zn(2+).

The protein resides in the cytoplasm. The enzyme catalyses tRNA(Cys) + L-cysteine + ATP = L-cysteinyl-tRNA(Cys) + AMP + diphosphate. The protein is Cysteine--tRNA ligase of Beijerinckia indica subsp. indica (strain ATCC 9039 / DSM 1715 / NCIMB 8712).